The following is a 183-amino-acid chain: Adenylate kinase (183 aa).

Position 12 to 17 (12 to 17) interacts with ATP; that stretch reads GAGKGT. Positions 32–61 are NMP; the sequence is STGDLLRAEVSAGSALGQEAESVMNRGELV. AMP contacts are provided by residues Thr-33, Arg-38, 59 to 61, 86 to 89, and Gln-93; these read ELV and GFPR. The tract at residues 127–133 is LID; the sequence is SRGRDDD. Position 128 (Arg-128) interacts with ATP. Positions 130 and 141 each coordinate AMP. ATP is bound at residue Gly-169.

Belongs to the adenylate kinase family. In terms of assembly, monomer.

It localises to the cytoplasm. It carries out the reaction AMP + ATP = 2 ADP. It participates in purine metabolism; AMP biosynthesis via salvage pathway; AMP from ADP: step 1/1. Catalyzes the reversible transfer of the terminal phosphate group between ATP and AMP. Plays an important role in cellular energy homeostasis and in adenine nucleotide metabolism. The polypeptide is Adenylate kinase (Synechococcus sp. (strain CC9311)).